Here is a 106-residue protein sequence, read N- to C-terminus: Large ribosomal subunit protein eL42A (106 aa).

At K40 the chain carries N6-methyllysine; by RKM3. N6-methyllysine; by RKM4 is present on K55.

Belongs to the eukaryotic ribosomal protein eL42 family. In terms of assembly, component of the large ribosomal subunit (LSU). Mature yeast ribosomes consist of a small (40S) and a large (60S) subunit. The 40S small subunit contains 1 molecule of ribosomal RNA (18S rRNA) and 33 different proteins (encoded by 57 genes). The large 60S subunit contains 3 rRNA molecules (25S, 5.8S and 5S rRNA) and 46 different proteins (encoded by 81 genes). Post-translationally, in wild-type cells, 78% of L42 is monomethylated at both Lys-40 and Lys-55, and 22% are a mixture of species with either residue monomethylated.

It is found in the cytoplasm. In terms of biological role, component of the ribosome, a large ribonucleoprotein complex responsible for the synthesis of proteins in the cell. The small ribosomal subunit (SSU) binds messenger RNAs (mRNAs) and translates the encoded message by selecting cognate aminoacyl-transfer RNA (tRNA) molecules. The large subunit (LSU) contains the ribosomal catalytic site termed the peptidyl transferase center (PTC), which catalyzes the formation of peptide bonds, thereby polymerizing the amino acids delivered by tRNAs into a polypeptide chain. The nascent polypeptides leave the ribosome through a tunnel in the LSU and interact with protein factors that function in enzymatic processing, targeting, and the membrane insertion of nascent chains at the exit of the ribosomal tunnel. This chain is Large ribosomal subunit protein eL42A, found in Saccharomyces cerevisiae (strain ATCC 204508 / S288c) (Baker's yeast).